The sequence spans 199 residues: NAD(P)H dehydrogenase (quinone) (199 aa).

The Flavodoxin-like domain occupies 4-190 (VLVLYYSAYG…DGARFQGKRV (187 aa)). Residues 10-15 (SAYGHM) and 78-80 (TRY) each bind FMN. Tyr-12 is a binding site for NAD(+). Trp-98 is a substrate binding site. Residues 113–119 (STATQHG) and His-134 contribute to the FMN site. Positions 157-185 (GGAPYGMTTTADGDGSRQPSEQELDGARF) are disordered. A compositionally biased stretch (polar residues) spans 163–177 (MTTTADGDGSRQPSE).

Belongs to the WrbA family. FMN serves as cofactor.

The catalysed reaction is a quinone + NADH + H(+) = a quinol + NAD(+). It catalyses the reaction a quinone + NADPH + H(+) = a quinol + NADP(+). This Brucella anthropi (strain ATCC 49188 / DSM 6882 / CCUG 24695 / JCM 21032 / LMG 3331 / NBRC 15819 / NCTC 12168 / Alc 37) (Ochrobactrum anthropi) protein is NAD(P)H dehydrogenase (quinone).